Reading from the N-terminus, the 130-residue chain is Small ribosomal subunit protein uS9 (130 aa).

It belongs to the universal ribosomal protein uS9 family.

The polypeptide is Small ribosomal subunit protein uS9 (Xylella fastidiosa (strain 9a5c)).